Reading from the N-terminus, the 298-residue chain is N-acetylmuramic acid 6-phosphate etherase (298 aa).

In terms of domain architecture, SIS spans 57-220; that stretch reads IAAAFGKGGR…STGAMIRTGK (164 aa). E85 serves as the catalytic Proton donor. The active site involves E116.

Belongs to the GCKR-like family. MurNAc-6-P etherase subfamily. As to quaternary structure, homodimer.

It catalyses the reaction N-acetyl-D-muramate 6-phosphate + H2O = N-acetyl-D-glucosamine 6-phosphate + (R)-lactate. It participates in amino-sugar metabolism; 1,6-anhydro-N-acetylmuramate degradation. The protein operates within amino-sugar metabolism; N-acetylmuramate degradation. Its pathway is cell wall biogenesis; peptidoglycan recycling. Specifically catalyzes the cleavage of the D-lactyl ether substituent of MurNAc 6-phosphate, producing GlcNAc 6-phosphate and D-lactate. Together with AnmK, is also required for the utilization of anhydro-N-acetylmuramic acid (anhMurNAc) either imported from the medium or derived from its own cell wall murein, and thus plays a role in cell wall recycling. This chain is N-acetylmuramic acid 6-phosphate etherase, found in Aeromonas hydrophila subsp. hydrophila (strain ATCC 7966 / DSM 30187 / BCRC 13018 / CCUG 14551 / JCM 1027 / KCTC 2358 / NCIMB 9240 / NCTC 8049).